The sequence spans 924 residues: Alpha-actinin, sarcomeric (924 aa).

An actin-binding region spans residues 1 to 250 (MMMENGLSME…IMTYVSCYYH (250 aa)). Calponin-homology (CH) domains lie at 34 to 138 (KQQK…LRFA) and 147 to 253 (MTAK…HAFQ). Spectrin repeat units follow at residues 251-395 (AFQG…TVSD), 396-510 (ISNS…RCQR), 511-631 (ICDQ…TAND), and 632-744 (MTRK…TMET). EF-hand domains lie at 778–813 (EQLN…LGYS) and 819–854 (QGDL…ESTD). 5 residues coordinate Ca(2+): D791, N793, T795, R797, and E802.

Belongs to the alpha-actinin family. In terms of assembly, homodimer; antiparallel. Interacts with Smn; the interaction occurs in adult thoracic tissues. As to expression, larval muscle isoform is expressed in the larval body wall, adult muscles of the head and abdomen and supercontractile muscles of the larva and adult. Adult muscle isoform accumulates within adult fibrillar and tubular muscles.

It localises to the cytoplasm. Its subcellular location is the myofibril. It is found in the sarcomere. The protein localises to the z line. Its function is as follows. F-actin cross-linking protein which is thought to anchor actin to a variety of intracellular structures. This is a bundling protein. This Drosophila melanogaster (Fruit fly) protein is Alpha-actinin, sarcomeric (Actn).